A 299-amino-acid polypeptide reads, in one-letter code: MPLSGTPAPNKKRKSSKLIMELTGGGQESSGLNLGKKISVPRDVMLEELSLLTNRGSKMFKLRQMRVEKFIYENHPDVFSDSSMDHFQKFLPTVGGQLGTAGQGFSYSKSNGRGGSQAGGSGSAGQYGSDQQHHLGSGSGAGGTGGPAGQAGRGGAAGTAGVGETGSGDQAGGEGKHITVFKTYISPWERAMGVDPQQKMELGIDLLAYGAKAELPKYKSFNRTAMPYGGYEKASKRMTFQMPKFDLGPLLSEPLVLYNQNLSNRPSFNRTPIPWLSSGEPVDYNVDIGIPLDGETEEL.

A disordered region spans residues 1 to 34; the sequence is MPLSGTPAPNKKRKSSKLIMELTGGGQESSGLNL. The residue at position 82 (Ser-82) is a Phosphoserine. Residues 102–174 form a disordered region; it reads GQGFSYSKSN…TGSGDQAGGE (73 aa). 2 stretches are compositionally biased toward gly residues: residues 112–125 and 137–173; these read GRGGSQAGGSGSAG and SGSGAGGTGGPAGQAGRGGAAGTAGVGETGSGDQAGG.

This sequence belongs to the myozenin family. In terms of assembly, interacts with ACTN2, ACTN3, FLNA, FLNB, FLNC, LDB3, PPP3CA and TCAP. Interacts via its C-terminal region with MYOT. Expressed primarily in skeletal muscle. Detected at lower levels in heart, prostate and pancreas.

It is found in the nucleus. The protein localises to the cell projection. Its subcellular location is the pseudopodium. Myozenins may serve as intracellular binding proteins involved in linking Z-disk proteins such as alpha-actinin, gamma-filamin, TCAP/telethonin, LDB3/ZASP and localizing calcineurin signaling to the sarcomere. Plays an important role in the modulation of calcineurin signaling. May play a role in myofibrillogenesis. The protein is Myozenin-1 of Homo sapiens (Human).